Here is a 313-residue protein sequence, read N- to C-terminus: MKTLLLLIPLVLTACGTLTGIPAHGGGKRFAVEQELVAASSRAAVKEMDLSALKGRKAALYVSVMGDQGSGNISGGRYSIDALIRGGYHNNPDSATRYSYPAYDTTATTKSDALSGVTTSTSLLNAPAAALTKNNGRKGERSAGLSVNGTGDYRNETLLANPRDVSFLTNLIQTVFYLRGIEVVPPEYADTDVFVTVDVFGTVRSRTELHLYNAETLKAQTKLEYFAVDRDSRKLLIAPKTAAYESQYQEQYALWMGPYSVGKTVKASDRLMVDFSDITPYGDTTAQNRPDFKQNNGKNPDVGNEVIRRRKGG.

The signal sequence occupies residues 1–14 (MKTLLLLIPLVLTA). Cys-15 carries the N-palmitoyl cysteine lipid modification. Residue Cys-15 is the site of S-diacylglycerol cysteine attachment. A compositionally biased stretch (polar residues) spans 282-298 (GDTTAQNRPDFKQNNGK). A disordered region spans residues 282–313 (GDTTAQNRPDFKQNNGKNPDVGNEVIRRRKGG).

Belongs to the MafA family.

It is found in the cell outer membrane. In Neisseria gonorrhoeae (strain ATCC 700825 / FA 1090), this protein is Adhesin MafA 2/3 (mafA2).